The sequence spans 100 residues: Urease subunit gamma (100 aa).

Belongs to the urease gamma subunit family. Heterotrimer of UreA (gamma), UreB (beta) and UreC (alpha) subunits. Three heterotrimers associate to form the active enzyme.

Its subcellular location is the cytoplasm. The catalysed reaction is urea + 2 H2O + H(+) = hydrogencarbonate + 2 NH4(+). It functions in the pathway nitrogen metabolism; urea degradation; CO(2) and NH(3) from urea (urease route): step 1/1. The polypeptide is Urease subunit gamma (Acinetobacter baumannii (strain SDF)).